A 693-amino-acid chain; its full sequence is Elongation factor G (693 aa).

One can recognise a tr-type G domain in the interval 7 to 282 (EKIRNIGITA…SVIDYLPAPT (276 aa)). GTP contacts are provided by residues 16–23 (AHIDAGKT), 80–84 (DTPGH), and 134–137 (NKLD).

Belongs to the TRAFAC class translation factor GTPase superfamily. Classic translation factor GTPase family. EF-G/EF-2 subfamily.

It localises to the cytoplasm. Its function is as follows. Catalyzes the GTP-dependent ribosomal translocation step during translation elongation. During this step, the ribosome changes from the pre-translocational (PRE) to the post-translocational (POST) state as the newly formed A-site-bound peptidyl-tRNA and P-site-bound deacylated tRNA move to the P and E sites, respectively. Catalyzes the coordinated movement of the two tRNA molecules, the mRNA and conformational changes in the ribosome. The sequence is that of Elongation factor G from Granulibacter bethesdensis (strain ATCC BAA-1260 / CGDNIH1).